A 296-amino-acid chain; its full sequence is ATP synthase peripheral stalk subunit OSCP, mitochondrial (296 aa).

This sequence belongs to the ATPase delta chain family. In terms of assembly, component of the ATP synthase complex composed at least of ATP5F1A/subunit alpha, ATP5F1B/subunit beta, ATP5MC1/subunit c (homooctomer), MT-ATP6/subunit a, MT-ATP8/subunit 8, ATP5ME/subunit e, ATP5MF/subunit f, ATP5MG/subunit g, ATP5MK/subunit k, ATP5MJ/subunit j, ATP5F1C/subunit gamma, ATP5F1D/subunit delta, ATP5F1E/subunit epsilon, ATP5PF/subunit F6, ATP5PB/subunit b, ATP5PD/subunit d, ATP5PO/subunit OSCP. ATP synthase complex consists of a soluble F(1) head domain (subunits alpha(3) and beta(3)) - the catalytic core - and a membrane F(0) domain - the membrane proton channel (subunits c, a, 8, e, f, g, k and j). These two domains are linked by a central stalk (subunits gamma, delta, and epsilon) rotating inside the F1 region and a stationary peripheral stalk (subunits F6, b, d, and OSCP).

The protein resides in the mitochondrion. It is found in the mitochondrion inner membrane. In terms of biological role, subunit OSCP, of the mitochondrial membrane ATP synthase complex (F(1)F(0) ATP synthase or Complex V) that produces ATP from ADP in the presence of a proton gradient across the membrane which is generated by electron transport complexes of the respiratory chain. ATP synthase complex consist of a soluble F(1) head domain - the catalytic core - and a membrane F(1) domain - the membrane proton channel. These two domains are linked by a central stalk rotating inside the F(1) region and a stationary peripheral stalk. During catalysis, ATP synthesis in the catalytic domain of F(1) is coupled via a rotary mechanism of the central stalk subunits to proton translocation. In vivo, can only synthesize ATP although its ATP hydrolase activity can be activated artificially in vitro. Part of the complex F(0) domain. Part of the complex F(0) domain and the peripheric stalk, which acts as a stator to hold the catalytic alpha(3)beta(3) subcomplex and subunit a/ATP6 static relative to the rotary elements. In Dictyostelium discoideum (Social amoeba), this protein is ATP synthase peripheral stalk subunit OSCP, mitochondrial.